Here is a 497-residue protein sequence, read N- to C-terminus: L-arabinose isomerase (497 aa).

Mn(2+)-binding residues include Glu-306, Glu-331, His-348, and His-447.

It belongs to the arabinose isomerase family. Mn(2+) serves as cofactor.

The enzyme catalyses beta-L-arabinopyranose = L-ribulose. Its pathway is carbohydrate degradation; L-arabinose degradation via L-ribulose; D-xylulose 5-phosphate from L-arabinose (bacterial route): step 1/3. Its function is as follows. Catalyzes the conversion of L-arabinose to L-ribulose. In Halalkalibacterium halodurans (strain ATCC BAA-125 / DSM 18197 / FERM 7344 / JCM 9153 / C-125) (Bacillus halodurans), this protein is L-arabinose isomerase.